Consider the following 253-residue polypeptide: Tetraspanin-11 (253 aa).

3 consecutive transmembrane segments (helical) span residues 19 to 39 (LLFI…AVGI), 63 to 83 (ILIF…GAII), and 93 to 113 (YFCL…LAHV). N-linked (GlcNAc...) asparagine glycosylation occurs at Asn-127. Residues 220–240 (LLLMGAVGIGVACLQICGMVL) form a helical membrane-spanning segment.

Belongs to the tetraspanin (TM4SF) family.

The protein localises to the membrane. This chain is Tetraspanin-11 (Tspan11), found in Mus musculus (Mouse).